A 290-amino-acid chain; its full sequence is D-tagatose-1,6-bisphosphate aldolase subunit KbaY (290 aa).

The active-site Proton donor is the D82. Zn(2+) contacts are provided by H83 and H180. G181 is a dihydroxyacetone phosphate binding site. Residue H208 coordinates Zn(2+). Residues 209–211 and 230–233 contribute to the dihydroxyacetone phosphate site; these read GAS and NVAT.

The protein belongs to the class II fructose-bisphosphate aldolase family. TagBP aldolase KbaY subfamily. In terms of assembly, homotetramer. Forms a complex with KbaZ. The cofactor is Zn(2+).

The enzyme catalyses D-tagatofuranose 1,6-bisphosphate = D-glyceraldehyde 3-phosphate + dihydroxyacetone phosphate. It participates in carbohydrate metabolism; D-tagatose 6-phosphate degradation; D-glyceraldehyde 3-phosphate and glycerone phosphate from D-tagatose 6-phosphate: step 2/2. Its function is as follows. Catalytic subunit of the tagatose-1,6-bisphosphate aldolase KbaYZ, which catalyzes the reversible aldol condensation of dihydroxyacetone phosphate (DHAP or glycerone-phosphate) with glyceraldehyde 3-phosphate (G3P) to produce tagatose 1,6-bisphosphate (TBP). Requires KbaZ subunit for full activity and stability. This is D-tagatose-1,6-bisphosphate aldolase subunit KbaY from Salmonella arizonae (strain ATCC BAA-731 / CDC346-86 / RSK2980).